A 131-amino-acid chain; its full sequence is MPVTDSIADYITRIRNAGRAKNKTTDIPYSKLRENISELLVAKGYIKSFTVITTEQFPFIRIDLKYSALGEPAIREITRVSKPGRRVYQGKDIRKYLGGLGLYILSSSKGIITDKEAREQGVGGEILFRIY.

It belongs to the universal ribosomal protein uS8 family. In terms of assembly, part of the 30S ribosomal subunit. Contacts proteins S5 and S12.

Its function is as follows. One of the primary rRNA binding proteins, it binds directly to 16S rRNA central domain where it helps coordinate assembly of the platform of the 30S subunit. This Chlorobium limicola (strain DSM 245 / NBRC 103803 / 6330) protein is Small ribosomal subunit protein uS8.